The primary structure comprises 266 residues: MNKDFCIKNKKFQSRLILGTGRYRSLLEAKQSIEASGCDIVTVAIRRINADNIGFIKSLIKLINWQKYWLLPNTAGCQTAEEAIRVANLGQEIAKQLGQVDNNFVKLEVIPANKYLFPDPIGTLKAAEHLVKQGFVVLPYINSDPILAKQLEDIGCSAVMPLASAIGSGQGLKNIDNIRIIVEASKVPVIVDAGIGVPSEATQVMEIGADAVLINTAVAQCKVPVAMANAMRLAVAAGYEAHSAGRIPIKNYARTSSPNFDRIGQI.

Catalysis depends on Lys-106, which acts as the Schiff-base intermediate with DXP. 1-deoxy-D-xylulose 5-phosphate is bound by residues Gly-167, Ala-193–Gly-194, and Asn-215–Thr-216.

It belongs to the ThiG family. In terms of assembly, homotetramer. Forms heterodimers with either ThiH or ThiS.

It localises to the plastid. The protein localises to the chloroplast. The catalysed reaction is [ThiS sulfur-carrier protein]-C-terminal-Gly-aminoethanethioate + 2-iminoacetate + 1-deoxy-D-xylulose 5-phosphate = [ThiS sulfur-carrier protein]-C-terminal Gly-Gly + 2-[(2R,5Z)-2-carboxy-4-methylthiazol-5(2H)-ylidene]ethyl phosphate + 2 H2O + H(+). The protein operates within cofactor biosynthesis; thiamine diphosphate biosynthesis. Catalyzes the rearrangement of 1-deoxy-D-xylulose 5-phosphate (DXP) to produce the thiazole phosphate moiety of thiamine. Sulfur is provided by the thiocarboxylate moiety of the carrier protein ThiS. In vitro, sulfur can be provided by H(2)S. The protein is Thiazole synthase of Cyanidium caldarium (Red alga).